Here is a 205-residue protein sequence, read N- to C-terminus: Pyridoxal 5'-phosphate synthase subunit PdxT (205 aa).

54-56 provides a ligand contact to L-glutamine; the sequence is GES. Residue Cys86 is the Nucleophile of the active site. Residues Arg118 and 147 to 148 contribute to the L-glutamine site; that span reads IR. Residues His183 and Glu185 each act as charge relay system in the active site.

The protein belongs to the glutaminase PdxT/SNO family. In the presence of PdxS, forms a dodecamer of heterodimers. Only shows activity in the heterodimer.

The catalysed reaction is aldehydo-D-ribose 5-phosphate + D-glyceraldehyde 3-phosphate + L-glutamine = pyridoxal 5'-phosphate + L-glutamate + phosphate + 3 H2O + H(+). The enzyme catalyses L-glutamine + H2O = L-glutamate + NH4(+). It participates in cofactor biosynthesis; pyridoxal 5'-phosphate biosynthesis. Functionally, catalyzes the hydrolysis of glutamine to glutamate and ammonia as part of the biosynthesis of pyridoxal 5'-phosphate. The resulting ammonia molecule is channeled to the active site of PdxS. This is Pyridoxal 5'-phosphate synthase subunit PdxT from Nitrosopumilus maritimus (strain SCM1).